The chain runs to 441 residues: Cytochrome c biogenesis protein Ccs1 (441 aa).

3 helical membrane-spanning segments follow: residues 19 to 39 (LKLA…GTVI), 78 to 98 (TWWF…CTLA), and 164 to 184 (IGPI…LLGN).

Belongs to the Ccs1/CcsB family. May interact with CcsA.

It localises to the plastid. The protein resides in the chloroplast thylakoid membrane. In terms of biological role, required during biogenesis of c-type cytochromes (cytochrome c6 and cytochrome f) at the step of heme attachment. This chain is Cytochrome c biogenesis protein Ccs1, found in Rhodomonas salina (Cryptomonas salina).